Reading from the N-terminus, the 377-residue chain is MLKRASFVEVNTASLRHNFSAVKSIVPKDAHIMAVVKANAYGVGAIKASEIFLQEGAHYLGVATLDEALELHSHFSKTPILILGYSPNSNASMLIDNDLSAMIFSLEQAEVFSQTALKSQKRLKVHLKIDTGMHRLGLEPNFKSIEIIKKIRALKGLEVEGIFTHLSNADAKIKTHAKNQMKAFNAFLEQLSNQKIEFQYRHAYNSAGILSLCNGNENRFLNLYRPGIMLYGFYPSNGMKETCPTILKNVISLKAQIVQIRSVKKGEFIGYGEHFYTNEETLVGVLALGYADGLMRALGNRIQVAINNQLAPLIGKVCMDQCFVKLNNIQAKEGDEVILFGDKSAKANDASEIAALLNTIPYETISTLSKRLERVYI.

Lys37 acts as the Proton acceptor; specific for D-alanine in catalysis. An N6-(pyridoxal phosphate)lysine modification is found at Lys37. Residue Arg135 participates in substrate binding. The active-site Proton acceptor; specific for L-alanine is the Tyr271. Met319 provides a ligand contact to substrate.

Belongs to the alanine racemase family. The cofactor is pyridoxal 5'-phosphate.

The catalysed reaction is L-alanine = D-alanine. The protein operates within amino-acid biosynthesis; D-alanine biosynthesis; D-alanine from L-alanine: step 1/1. Its function is as follows. Catalyzes the interconversion of L-alanine and D-alanine. May also act on other amino acids. This chain is Alanine racemase (alr), found in Helicobacter pylori (strain Shi470).